We begin with the raw amino-acid sequence, 107 residues long: Pyrimidine/purine nucleoside phosphorylase (107 aa).

The protein belongs to the nucleoside phosphorylase PpnP family.

It catalyses the reaction a purine D-ribonucleoside + phosphate = a purine nucleobase + alpha-D-ribose 1-phosphate. The catalysed reaction is adenosine + phosphate = alpha-D-ribose 1-phosphate + adenine. The enzyme catalyses cytidine + phosphate = cytosine + alpha-D-ribose 1-phosphate. It carries out the reaction guanosine + phosphate = alpha-D-ribose 1-phosphate + guanine. It catalyses the reaction inosine + phosphate = alpha-D-ribose 1-phosphate + hypoxanthine. The catalysed reaction is thymidine + phosphate = 2-deoxy-alpha-D-ribose 1-phosphate + thymine. The enzyme catalyses uridine + phosphate = alpha-D-ribose 1-phosphate + uracil. It carries out the reaction xanthosine + phosphate = alpha-D-ribose 1-phosphate + xanthine. In terms of biological role, catalyzes the phosphorolysis of diverse nucleosides, yielding D-ribose 1-phosphate and the respective free bases. Can use uridine, adenosine, guanosine, cytidine, thymidine, inosine and xanthosine as substrates. Also catalyzes the reverse reactions. The polypeptide is Pyrimidine/purine nucleoside phosphorylase (Azoarcus sp. (strain BH72)).